A 180-amino-acid chain; its full sequence is NAD(P)H-quinone oxidoreductase subunit I, chloroplastic (180 aa).

4Fe-4S ferredoxin-type domains are found at residues 55-84 and 95-124; these read GRIH…VDWR and LNYS…MTEE. [4Fe-4S] cluster-binding residues include cysteine 64, cysteine 67, cysteine 70, cysteine 74, cysteine 104, cysteine 107, cysteine 110, and cysteine 114.

This sequence belongs to the complex I 23 kDa subunit family. As to quaternary structure, NDH is composed of at least 16 different subunits, 5 of which are encoded in the nucleus. [4Fe-4S] cluster serves as cofactor.

Its subcellular location is the plastid. It is found in the chloroplast thylakoid membrane. It carries out the reaction a plastoquinone + NADH + (n+1) H(+)(in) = a plastoquinol + NAD(+) + n H(+)(out). The enzyme catalyses a plastoquinone + NADPH + (n+1) H(+)(in) = a plastoquinol + NADP(+) + n H(+)(out). Functionally, NDH shuttles electrons from NAD(P)H:plastoquinone, via FMN and iron-sulfur (Fe-S) centers, to quinones in the photosynthetic chain and possibly in a chloroplast respiratory chain. The immediate electron acceptor for the enzyme in this species is believed to be plastoquinone. Couples the redox reaction to proton translocation, and thus conserves the redox energy in a proton gradient. The sequence is that of NAD(P)H-quinone oxidoreductase subunit I, chloroplastic from Illicium oligandrum (Star anise).